Reading from the N-terminus, the 246-residue chain is NLP effector protein 2 (246 aa).

Residues 1 to 19 (MKFVVFLCAIAAVVATIQG) form the signal peptide. A Conserved undecapeptide motif I motif is present at residues 113–123 (AIMYSWYFPKD). The short motif at 130–136 (GHRHDWE) is the Hepta-peptide GHRHDWE motif II element.

This sequence belongs to the Necrosis inducing protein (NPP1) family.

The protein resides in the secreted. In terms of biological role, secreted effector that contributes strongly to virulence during infection by P.capsici. Causes large necrotic areas in both host C.annuum and non-host N.benthamiana. The polypeptide is NLP effector protein 2 (Phytophthora capsici).